We begin with the raw amino-acid sequence, 471 residues long: Nuclear distribution protein PAC1 (471 aa).

The 33-residue stretch at 9–41 folds into the LisH domain; sequence QAEELHKSMIAYLLSVNLSKSAAALREELADSV. Residues 60-87 are a coiled coil; the sequence is TSVVRLQKKIMDLESRNAALQQELDSAT. The segment covering 83 to 93 has biased composition (polar residues); sequence LDSATPTSLSR. A disordered region spans residues 83–108; sequence LDSATPTSLSRRNQDPASWLPRAPAR. 8 WD repeats span residues 113-154, 156-196, 200-247, 250-289, 292-352, 354-393, 398-428, and 429-467; these read SHRG…RTIK, HTRA…KNIR, GHDH…CVKT, GHLD…TKST, GHEH…IKTL, GHDN…KCVR, AHGH…INGQ, and GTPS…MNVR. Residues 424–449 form a disordered region; that stretch reads GINGQGTPSMNGVSISTTSKKEDTGG. A compositionally biased stretch (polar residues) spans 428–441; that stretch reads QGTPSMNGVSISTT.

The protein belongs to the WD repeat LIS1/nudF family. In terms of assembly, self-associates. Interacts with NDL1 and dynein.

Its subcellular location is the cytoplasm. The protein localises to the cytoskeleton. It localises to the spindle pole. Positively regulates the activity of the minus-end directed microtubule motor protein dynein. May enhance dynein-mediated microtubule sliding by targeting dynein to the microtubule plus end. Required for nuclear migration during vegetative growth as well as development. Required for retrograde early endosome (EE) transport from the hyphal tip. Required for localization of dynein to the mitotic spindle poles. Recruits additional proteins to the dynein complex at SPBs. The polypeptide is Nuclear distribution protein PAC1 (Coccidioides posadasii (strain C735) (Valley fever fungus)).